Here is a 129-residue protein sequence, read N- to C-terminus: Aspartate 1-decarboxylase (129 aa).

Catalysis depends on Ser25, which acts as the Schiff-base intermediate with substrate; via pyruvic acid. Ser25 bears the Pyruvic acid (Ser) mark. Thr57 contributes to the substrate binding site. The active-site Proton donor is Tyr58. 73–75 (GAA) contributes to the substrate binding site.

This sequence belongs to the PanD family. As to quaternary structure, heterooctamer of four alpha and four beta subunits. Requires pyruvate as cofactor. Post-translationally, is synthesized initially as an inactive proenzyme, which is activated by self-cleavage at a specific serine bond to produce a beta-subunit with a hydroxyl group at its C-terminus and an alpha-subunit with a pyruvoyl group at its N-terminus.

It localises to the cytoplasm. It carries out the reaction L-aspartate + H(+) = beta-alanine + CO2. It functions in the pathway cofactor biosynthesis; (R)-pantothenate biosynthesis; beta-alanine from L-aspartate: step 1/1. Its function is as follows. Catalyzes the pyruvoyl-dependent decarboxylation of aspartate to produce beta-alanine. The polypeptide is Aspartate 1-decarboxylase (Prosthecochloris aestuarii (strain DSM 271 / SK 413)).